The primary structure comprises 374 residues: Glutamate 5-kinase (374 aa).

Lys-13 is a binding site for ATP. 3 residues coordinate substrate: Ser-54, Asp-141, and Asn-153. Residue 173–174 participates in ATP binding; the sequence is SD. The PUA domain occupies 278 to 355; it reads KGTVHLDSGA…NEIESVLGYP (78 aa).

Belongs to the glutamate 5-kinase family.

Its subcellular location is the cytoplasm. It carries out the reaction L-glutamate + ATP = L-glutamyl 5-phosphate + ADP. Its pathway is amino-acid biosynthesis; L-proline biosynthesis; L-glutamate 5-semialdehyde from L-glutamate: step 1/2. Functionally, catalyzes the transfer of a phosphate group to glutamate to form L-glutamate 5-phosphate. This chain is Glutamate 5-kinase, found in Roseobacter denitrificans (strain ATCC 33942 / OCh 114) (Erythrobacter sp. (strain OCh 114)).